The following is a 507-amino-acid chain: 2,3-bisphosphoglycerate-independent phosphoglycerate mutase (507 aa).

The Mn(2+) site is built by Asp11 and Ser61. Residue Ser61 is the Phosphoserine intermediate of the active site. Substrate is bound by residues His122, 152–153 (RD), Arg183, Arg189, 258–261 (RNDR), and Lys332. Mn(2+) is bound by residues Asp399, His403, Asp440, His441, and His458.

The protein belongs to the BPG-independent phosphoglycerate mutase family. In terms of assembly, monomer. The cofactor is Mn(2+).

It carries out the reaction (2R)-2-phosphoglycerate = (2R)-3-phosphoglycerate. The protein operates within carbohydrate degradation; glycolysis; pyruvate from D-glyceraldehyde 3-phosphate: step 3/5. In terms of biological role, catalyzes the interconversion of 2-phosphoglycerate and 3-phosphoglycerate. This chain is 2,3-bisphosphoglycerate-independent phosphoglycerate mutase, found in Parabacteroides distasonis (strain ATCC 8503 / DSM 20701 / CIP 104284 / JCM 5825 / NCTC 11152).